The sequence spans 299 residues: Superkiller complex protein 8 (299 aa).

WD repeat units lie at residues Ala-11–Glu-48, Lys-54–Thr-93, Ser-96–Ser-135, Asn-138–Glu-177, Ala-180–Ala-219, Gly-223–Ser-263, and Ala-266–Gln-299.

This sequence belongs to the SKI8 family.

The polypeptide is Superkiller complex protein 8 (skic8) (Dictyostelium discoideum (Social amoeba)).